A 78-amino-acid polypeptide reads, in one-letter code: D-alanyl carrier protein (78 aa).

In terms of domain architecture, Carrier spans 1 to 78 (MEFREQVLDL…KIVEALEELK (78 aa)). The residue at position 36 (Ser36) is an O-(pantetheine 4'-phosphoryl)serine.

Belongs to the DltC family. 4'-phosphopantetheine is transferred from CoA to a specific serine of apo-DCP.

It is found in the cytoplasm. It functions in the pathway cell wall biogenesis; lipoteichoic acid biosynthesis. In terms of biological role, carrier protein involved in the D-alanylation of lipoteichoic acid (LTA). The loading of thioester-linked D-alanine onto DltC is catalyzed by D-alanine--D-alanyl carrier protein ligase DltA. The DltC-carried D-alanyl group is further transferred to cell membrane phosphatidylglycerol (PG) by forming an ester bond, probably catalyzed by DltD. D-alanylation of LTA plays an important role in modulating the properties of the cell wall in Gram-positive bacteria, influencing the net charge of the cell wall. The polypeptide is D-alanyl carrier protein (Staphylococcus carnosus (strain TM300)).